We begin with the raw amino-acid sequence, 194 residues long: Chitin synthase 2 (194 aa).

Belongs to the chitin synthase family. Class III subfamily.

Its subcellular location is the cell membrane. The catalysed reaction is [(1-&gt;4)-N-acetyl-beta-D-glucosaminyl](n) + UDP-N-acetyl-alpha-D-glucosamine = [(1-&gt;4)-N-acetyl-beta-D-glucosaminyl](n+1) + UDP + H(+). Polymerizes chitin, a structural polymer of the cell wall and septum, by transferring the sugar moiety of UDP-GlcNAc to the non-reducing end of the growing chitin polymer. This Ajellomyces capsulatus (Darling's disease fungus) protein is Chitin synthase 2 (CHS2).